Consider the following 342-residue polypeptide: S-adenosylmethionine:tRNA ribosyltransferase-isomerase (342 aa).

The protein belongs to the QueA family. In terms of assembly, monomer.

Its subcellular location is the cytoplasm. The enzyme catalyses 7-aminomethyl-7-carbaguanosine(34) in tRNA + S-adenosyl-L-methionine = epoxyqueuosine(34) in tRNA + adenine + L-methionine + 2 H(+). The protein operates within tRNA modification; tRNA-queuosine biosynthesis. In terms of biological role, transfers and isomerizes the ribose moiety from AdoMet to the 7-aminomethyl group of 7-deazaguanine (preQ1-tRNA) to give epoxyqueuosine (oQ-tRNA). This chain is S-adenosylmethionine:tRNA ribosyltransferase-isomerase, found in Listeria monocytogenes serotype 4b (strain F2365).